Consider the following 172-residue polypeptide: MKEYKGKLNISKARIGIVISRFNETITKNLLEGSLDELERYGISTQNLPVAWVPGAFEIPLIAKQMALSGEFDAIICLGAIIRGTTPHFDYVASQSAAGILNVSLEINLPVVFGILTTDTVEQAMERSGVKMGNKGREAVQTAIEMIDLTDQLSLLRNHPHSSTANNTSVCK.

Residues Phe22 and 56–58 each bind 5-amino-6-(D-ribitylamino)uracil; that span reads AFE. 78 to 79 lines the (2S)-2-hydroxy-3-oxobutyl phosphate pocket; it reads LG. 80 to 82 is a binding site for 5-amino-6-(D-ribitylamino)uracil; that stretch reads AII. His88 functions as the Proton donor in the catalytic mechanism. Position 113 (Phe113) interacts with 5-amino-6-(D-ribitylamino)uracil. A (2S)-2-hydroxy-3-oxobutyl phosphate-binding site is contributed by Arg127.

Belongs to the DMRL synthase family.

The catalysed reaction is (2S)-2-hydroxy-3-oxobutyl phosphate + 5-amino-6-(D-ribitylamino)uracil = 6,7-dimethyl-8-(1-D-ribityl)lumazine + phosphate + 2 H2O + H(+). It functions in the pathway cofactor biosynthesis; riboflavin biosynthesis; riboflavin from 2-hydroxy-3-oxobutyl phosphate and 5-amino-6-(D-ribitylamino)uracil: step 1/2. Functionally, catalyzes the formation of 6,7-dimethyl-8-ribityllumazine by condensation of 5-amino-6-(D-ribitylamino)uracil with 3,4-dihydroxy-2-butanone 4-phosphate. This is the penultimate step in the biosynthesis of riboflavin. This Protochlamydia amoebophila (strain UWE25) protein is 6,7-dimethyl-8-ribityllumazine synthase.